A 1008-amino-acid chain; its full sequence is Probable pre-mRNA-splicing factor ATP-dependent RNA helicase mog-4 (1008 aa).

2 disordered regions span residues 104 to 146 (SSTK…SESD) and 169 to 202 (NKKE…REES). Over residues 127–137 (KASKPGKSVKP) the composition is skewed to low complexity. The 165-residue stretch at 374 to 538 (IEAVKEHQVL…FDDAPIFRIP (165 aa)) folds into the Helicase ATP-binding domain. Position 387–394 (387–394 (GETGSGKT)) interacts with ATP. The DEAH box motif lies at 485-488 (DEAH). In terms of domain architecture, Helicase C-terminal spans 563 to 737 (TIMQIHLTQP…NVVLMLKSLG (175 aa)). The segment at 988 to 1008 (EDATNKKMPKNKGKSGKDLER) is disordered.

The protein belongs to the DEAD box helicase family. DEAH subfamily. DDX16/PRP8 sub-subfamily. Interacts with mep-1 and smn-1.

Its subcellular location is the nucleus. The enzyme catalyses ATP + H2O = ADP + phosphate + H(+). ATP-binding RNA helicase involved in pre-mRNA splicing. Operates during embryogenesis. The sequence is that of Probable pre-mRNA-splicing factor ATP-dependent RNA helicase mog-4 (mog-4) from Caenorhabditis elegans.